We begin with the raw amino-acid sequence, 302 residues long: Glutaminase (302 aa).

The substrate site is built by S61, N111, E155, N162, Y186, Y238, and V256.

This sequence belongs to the glutaminase family. Homotetramer.

The catalysed reaction is L-glutamine + H2O = L-glutamate + NH4(+). The chain is Glutaminase from Stutzerimonas stutzeri (strain A1501) (Pseudomonas stutzeri).